A 268-amino-acid polypeptide reads, in one-letter code: Ribosomal RNA small subunit methyltransferase A (268 aa).

S-adenosyl-L-methionine contacts are provided by Asn12, Leu14, Gly38, Glu59, Asp82, and Asn107.

It belongs to the class I-like SAM-binding methyltransferase superfamily. rRNA adenine N(6)-methyltransferase family. RsmA subfamily.

The protein resides in the cytoplasm. The catalysed reaction is adenosine(1518)/adenosine(1519) in 16S rRNA + 4 S-adenosyl-L-methionine = N(6)-dimethyladenosine(1518)/N(6)-dimethyladenosine(1519) in 16S rRNA + 4 S-adenosyl-L-homocysteine + 4 H(+). Specifically dimethylates two adjacent adenosines (A1518 and A1519) in the loop of a conserved hairpin near the 3'-end of 16S rRNA in the 30S particle. May play a critical role in biogenesis of 30S subunits. This is Ribosomal RNA small subunit methyltransferase A from Aster yellows witches'-broom phytoplasma (strain AYWB).